The following is a 680-amino-acid chain: MTAEPNKPCQIKRDYPQLINLYPATAHNDAHYLSKLSIYQQRVFEAHSQQKLLVLGQMGLGNGLELLSWWRTQTNPNQRLLLKVFEPNPINAYELKLLWDQSASLAKVPELELLAQCLLHTEPTAIIGCQRLIFDDGRTTIDLHFGDIQSQLSSLIHSPLHPVQHWLVLPHLQNGLHQQIHWQMAKLSDDSATVATIGLNESSGLSETTVNRFQACGFEVRDFTCAEIQTNPQPDAILLHERHVLRRQDAKAYAFNPMAAILSSDAPSSIAIIGGGLASAHLALSLAERGQSTQIFCKDAKLGQGASGNRQGAIYPLLTPENDELSRFFQQAFLFSRRRVQALTSAPAPNQTPISHNFCGVLQTAHDERSQLRLDKIIQSQNWPSEIAYRVDAQQANCLANINIDKSGFFYPLAGWVCPYEYAEAALQKAQQLTAVKLHLETEILEIEHQSEGWYLITAKHRFGPFAQVVLANGAALTQFDASNKLQISPFRGQVSHVPAQFQLSQLATVLCANGYLTPSHEGLHCLGASYVKEPKHLDFCPQEQQENLAKMHESYPNQPWLEDIDMSGNNARVGVRMVTRDHFPMMGCAPDVAQIIKDYAEHQLTKESRHYWQTTPAPVHEGLYILGGLGSRGLSSGPLAAECLAAQLCGEPIPLDKATLCKLNPNRMWLRKLLKGKAL.

The segment at 1–267 (MTAEPNKPCQ…MAAILSSDAP (267 aa)) is tRNA (mnm(5)s(2)U34)-methyltransferase. The FAD-dependent cmnm(5)s(2)U34 oxidoreductase stretch occupies residues 273 to 680 (IGGGLASAHL…LRKLLKGKAL (408 aa)).

The protein in the N-terminal section; belongs to the methyltransferase superfamily. tRNA (mnm(5)s(2)U34)-methyltransferase family. In the C-terminal section; belongs to the DAO family. It depends on FAD as a cofactor.

It localises to the cytoplasm. It carries out the reaction 5-aminomethyl-2-thiouridine(34) in tRNA + S-adenosyl-L-methionine = 5-methylaminomethyl-2-thiouridine(34) in tRNA + S-adenosyl-L-homocysteine + H(+). In terms of biological role, catalyzes the last two steps in the biosynthesis of 5-methylaminomethyl-2-thiouridine (mnm(5)s(2)U) at the wobble position (U34) in tRNA. Catalyzes the FAD-dependent demodification of cmnm(5)s(2)U34 to nm(5)s(2)U34, followed by the transfer of a methyl group from S-adenosyl-L-methionine to nm(5)s(2)U34, to form mnm(5)s(2)U34. The sequence is that of tRNA 5-methylaminomethyl-2-thiouridine biosynthesis bifunctional protein MnmC from Shewanella putrefaciens (strain CN-32 / ATCC BAA-453).